The chain runs to 319 residues: Putative binding protein BAB2_1146 (319 aa).

Residues 1 to 22 form the signal peptide; the sequence is MKRRTFLAMSLALTFLPSVALA.

It belongs to the bacterial solute-binding protein SsuA/TauA family. The complex is composed of two ATP-binding proteins (BAB2_1147), two transmembrane proteins (BAB2_1148) and a solute-binding protein (BAB2_1146).

It localises to the periplasm. In terms of biological role, probably part of an ABC transporter complex. The chain is Putative binding protein BAB2_1146 from Brucella abortus (strain 2308).